The sequence spans 383 residues: NifS-like protein (383 aa).

Pyridoxal 5'-phosphate-binding positions include 58 to 59 (SE) and 184 to 186 (SLN).

Belongs to the class-V pyridoxal-phosphate-dependent aminotransferase family. NifS/IscS subfamily. Pyridoxal 5'-phosphate serves as cofactor.

It localises to the virion. The chain is NifS-like protein from African swine fever virus (isolate Pig/Kenya/KEN-50/1950) (ASFV).